The following is an 86-amino-acid chain: Small ribosomal subunit protein bS16 (86 aa).

The protein belongs to the bacterial ribosomal protein bS16 family.

The polypeptide is Small ribosomal subunit protein bS16 (Stenotrophomonas maltophilia (strain K279a)).